The following is a 609-amino-acid chain: UvrABC system protein C (609 aa).

In terms of domain architecture, GIY-YIG spans 19–97; sequence ASPGCYLWKS…IKKHNPRFNV (79 aa). Residues 208–243 form the UVR domain; the sequence is ESLVSDLNIKMSNASERLDFEKAARYRDMLQRIQNF.

This sequence belongs to the UvrC family. Interacts with UvrB in an incision complex.

It localises to the cytoplasm. Its function is as follows. The UvrABC repair system catalyzes the recognition and processing of DNA lesions. UvrC both incises the 5' and 3' sides of the lesion. The N-terminal half is responsible for the 3' incision and the C-terminal half is responsible for the 5' incision. This chain is UvrABC system protein C, found in Leptospira interrogans serogroup Icterohaemorrhagiae serovar copenhageni (strain Fiocruz L1-130).